The chain runs to 570 residues: MSYILSRKSYADMFGVTTGDKITLGDTNLLVRVEKDLTVYGEECKFGGGKVLRDGMGQASGYKSDDVLDLLITNALIIDYTGIYKADIGIKNGHIKAIGKSGNPHIMPGVHPDMIAGTVTEVIAGEGMIITAGGIDNHIHYICPQQMNEALASGITTFIGGGTGPATGTKATTCTPGAFHIEMMLKATDNIPMNIGFLGKGNTSHPEEIEEQIKAGALGLKLHEDWGTTPAAIDNCLSVAEKYDVQVCIHTDTLNESGFVESSRAAFKGRTIHTYHTEGAGGGHAPDIIVLCGDPDVLPSSTNPTKPFTVNTIDEHLDMLMVCHHLDRNIPEDVSFAESRIRGETIAAEDILHDMGALSMLSSDSQAMGRVGEVICRTWQTAHKMKEQRGLLEEDKQIDADNFRVKRYIAKYTINPAIAHGCSHVIGSVEVGKLADLVVWQPDFFGSRPELILKGGVIVQAQMGDPNASIPTPQPFFSRPMFGAMGKATGATSLAFVSAASEETVNGYGLNKKVTPVVGCRSVKKKDMKLNDFLPDIKVDAETYKVTVNGEWITCAPAKKLPLAQLYNLF.

The Urease domain maps to 133 to 570 (GGIDNHIHYI…LPLAQLYNLF (438 aa)). Residues H138, H140, and K221 each contribute to the Ni(2+) site. An N6-carboxylysine modification is found at K221. Substrate is bound at residue H223. Ni(2+) is bound by residues H250 and H276. Residue H324 is the Proton donor of the active site. D364 contributes to the Ni(2+) binding site.

The protein belongs to the metallo-dependent hydrolases superfamily. Urease alpha subunit family. Heterotrimer of UreA (gamma), UreB (beta) and UreC (alpha) subunits. Three heterotrimers associate to form the active enzyme. Ni cation is required as a cofactor. In terms of processing, carboxylation allows a single lysine to coordinate two nickel ions.

The protein localises to the cytoplasm. It carries out the reaction urea + 2 H2O + H(+) = hydrogencarbonate + 2 NH4(+). It functions in the pathway nitrogen metabolism; urea degradation; CO(2) and NH(3) from urea (urease route): step 1/1. The sequence is that of Urease subunit alpha from Cytophaga hutchinsonii (strain ATCC 33406 / DSM 1761 / CIP 103989 / NBRC 15051 / NCIMB 9469 / D465).